Reading from the N-terminus, the 632-residue chain is Mitochondrial distribution and morphology protein 34 (632 aa).

An SMP-LTD domain is found at 1–203 (MSFKVNWNSL…LPTLIHQLSL (203 aa)). Disordered regions lie at residues 221–253 (ANASTSSSSTSSTSSSTTSSSSSSSPSSFTSSL) and 384–435 (KPKR…SSTL). Over residues 224–252 (STSSSSTSSTSSSTTSSSSSSSPSSFTSS) the composition is skewed to low complexity. Residues 384 to 400 (KPKRRVIRLGKSKNKSK) are compositionally biased toward basic residues. Over residues 401–412 (SKTETKTEHNDE) the composition is skewed to basic and acidic residues. The span at 422–435 (PLSSTPASSSSSTL) shows a compositional bias: low complexity.

Belongs to the MDM34 family. As to quaternary structure, component of the ER-mitochondria encounter structure (ERMES) or MDM complex, composed of MMM1, MDM10, MDM12 and MDM34.

It is found in the mitochondrion outer membrane. Functionally, component of the ERMES/MDM complex, which serves as a molecular tether to connect the endoplasmic reticulum (ER) and mitochondria. Components of this complex are involved in the control of mitochondrial shape and protein biogenesis, and function in nonvesicular lipid trafficking between the ER and mitochondria. MDM34 is required for the interaction of the ER-resident membrane protein MMM1 and the outer mitochondrial membrane-resident beta-barrel protein MDM10. The sequence is that of Mitochondrial distribution and morphology protein 34 from Lodderomyces elongisporus (strain ATCC 11503 / CBS 2605 / JCM 1781 / NBRC 1676 / NRRL YB-4239) (Yeast).